Consider the following 1220-residue polypeptide: Putative cell agglutination protein SPAPB2C8.01 (1220 aa).

The signal sequence occupies residues 1–21; the sequence is MAVSRLLILICLYSFVTFAYP. Residues asparagine 44, asparagine 72, asparagine 131, and asparagine 160 are each glycosylated (N-linked (GlcNAc...) asparagine). A run of 24 repeats spans residues 110–145, 146–181, 182–217, 218–253, 254–289, 290–325, 326–361, 362–397, 398–433, 434–469, 470–505, 506–541, 542–577, 578–613, 614–649, 650–685, 686–721, 722–757, 758–793, 794–829, 830–865, 866–901, 902–937, and 938–973. A 24 X 36 AA approximate tandem repeats region spans residues 110 to 973; the sequence is NTITTTLYSG…GTVEVILPAP (864 aa). Asparagine 232 carries N-linked (GlcNAc...) asparagine glycosylation. Asparagine 304 carries an N-linked (GlcNAc...) asparagine glycan. Asparagine 376 is a glycosylation site (N-linked (GlcNAc...) asparagine). A glycan (N-linked (GlcNAc...) asparagine) is linked at asparagine 448. The N-linked (GlcNAc...) asparagine glycan is linked to asparagine 520. N-linked (GlcNAc...) asparagine glycosylation occurs at asparagine 592. Residues 1039–1202 form the PA14 domain; the sequence is FTQPAYFGSS…YAATSYAYTA (164 aa).

The protein belongs to the mam3/map4 family.

Its subcellular location is the cell surface. May be involved in agglutination during conjugation or other aspects of colony formation. This is Putative cell agglutination protein SPAPB2C8.01 from Schizosaccharomyces pombe (strain 972 / ATCC 24843) (Fission yeast).